The chain runs to 518 residues: Chromosomal replication initiator protein DnaA (518 aa).

The tract at residues M1 to S72 is domain I, interacts with DnaA modulators. A domain II region spans residues S72–T180. The tract at residues E145–E178 is disordered. A compositionally biased stretch (basic and acidic residues) spans A164–Y177. Positions N181–S397 are domain III, AAA+ region. ATP contacts are provided by G225, G227, K228, and T229. Positions R398–N518 are domain IV, binds dsDNA.

The protein belongs to the DnaA family. As to quaternary structure, oligomerizes as a right-handed, spiral filament on DNA at oriC.

It localises to the cytoplasm. Its function is as follows. Plays an essential role in the initiation and regulation of chromosomal replication. ATP-DnaA binds to the origin of replication (oriC) to initiate formation of the DNA replication initiation complex once per cell cycle. Binds the DnaA box (a 9 base pair repeat at the origin) and separates the double-stranded (ds)DNA. Forms a right-handed helical filament on oriC DNA; dsDNA binds to the exterior of the filament while single-stranded (ss)DNA is stabiized in the filament's interior. The ATP-DnaA-oriC complex binds and stabilizes one strand of the AT-rich DNA unwinding element (DUE), permitting loading of DNA polymerase. After initiation quickly degrades to an ADP-DnaA complex that is not apt for DNA replication. Binds acidic phospholipids. This chain is Chromosomal replication initiator protein DnaA, found in Neisseria meningitidis serogroup A / serotype 4A (strain DSM 15465 / Z2491).